A 431-amino-acid polypeptide reads, in one-letter code: Signal recognition particle 54 kDa protein (431 aa).

GTP contacts are provided by residues 105 to 112, 185 to 189, and 243 to 246; these read GVEGSGKT, DTAGR, and TKMD.

The protein belongs to the GTP-binding SRP family. SRP54 subfamily. Part of the signal recognition particle protein translocation system, which is composed of SRP and FtsY. Archaeal SRP consists of a 7S RNA molecule of 300 nucleotides and two protein subunits: SRP54 and SRP19.

Its subcellular location is the cytoplasm. The enzyme catalyses GTP + H2O = GDP + phosphate + H(+). Functionally, involved in targeting and insertion of nascent membrane proteins into the cytoplasmic membrane. Binds to the hydrophobic signal sequence of the ribosome-nascent chain (RNC) as it emerges from the ribosomes. The SRP-RNC complex is then targeted to the cytoplasmic membrane where it interacts with the SRP receptor FtsY. The protein is Signal recognition particle 54 kDa protein of Pyrobaculum calidifontis (strain DSM 21063 / JCM 11548 / VA1).